Reading from the N-terminus, the 305-residue chain is Tyrosine recombinase XerC (305 aa).

Positions 1 to 93 constitute a Core-binding (CB) domain; it reads MVLDGFAAYF…AWRQYCAWLV (93 aa). The region spanning 114–294 is the Tyr recombinase domain; sequence RVPKALPQEW…DFDHIARLYD (181 aa). Catalysis depends on residues R155, K179, H246, R249, and H272. Y281 (O-(3'-phospho-DNA)-tyrosine intermediate) is an active-site residue.

Belongs to the 'phage' integrase family. XerC subfamily. Forms a cyclic heterotetrameric complex composed of two molecules of XerC and two molecules of XerD.

It is found in the cytoplasm. Functionally, site-specific tyrosine recombinase, which acts by catalyzing the cutting and rejoining of the recombining DNA molecules. The XerC-XerD complex is essential to convert dimers of the bacterial chromosome into monomers to permit their segregation at cell division. It also contributes to the segregational stability of plasmids. This is Tyrosine recombinase XerC from Neisseria gonorrhoeae (strain ATCC 700825 / FA 1090).